The chain runs to 376 residues: Formate dehydrogenase 1 (376 aa).

Substrate contacts are provided by V97 and N121. Residues 176–177 (RI), D197, 244–248 (PLHKD), T270, D296, and 325–328 (HISG) each bind NAD(+).

The protein belongs to the D-isomer specific 2-hydroxyacid dehydrogenase family. FDH subfamily. In terms of assembly, homodimer.

The protein resides in the cytoplasm. It catalyses the reaction formate + NAD(+) = CO2 + NADH. Functionally, catalyzes the NAD(+)-dependent oxidation of formate to carbon dioxide. Formate oxidation is the final step in the methanol oxidation pathway in methylotrophic microorganisms. Has a role in the detoxification of exogenous formate in non-methylotrophic organisms. The protein is Formate dehydrogenase 1 (FDH1) of Saccharomyces cerevisiae (strain YJM789) (Baker's yeast).